The following is a 216-amino-acid chain: Holliday junction branch migration complex subunit RuvA (216 aa).

Positions 1-64 are domain I; that stretch reads MISFIKGVLI…EDAQQLYGFK (64 aa). The segment at 65 to 143 is domain II; sequence SKVDKKVFQE…KMANEIYAQT (79 aa). A flexible linker region spans residues 144–163; that stretch reads SGTTTTSQDSQAQQAPTSVV. The interval 164–216 is domain III; the sequence is LANSIFNESVDALLALGYKQKDAEKMARSAMGDATTAAEVIRKALQGSIKSKR.

This sequence belongs to the RuvA family. As to quaternary structure, homotetramer. Forms an RuvA(8)-RuvB(12)-Holliday junction (HJ) complex. HJ DNA is sandwiched between 2 RuvA tetramers; dsDNA enters through RuvA and exits via RuvB. An RuvB hexamer assembles on each DNA strand where it exits the tetramer. Each RuvB hexamer is contacted by two RuvA subunits (via domain III) on 2 adjacent RuvB subunits; this complex drives branch migration. In the full resolvosome a probable DNA-RuvA(4)-RuvB(12)-RuvC(2) complex forms which resolves the HJ.

It is found in the cytoplasm. The RuvA-RuvB-RuvC complex processes Holliday junction (HJ) DNA during genetic recombination and DNA repair, while the RuvA-RuvB complex plays an important role in the rescue of blocked DNA replication forks via replication fork reversal (RFR). RuvA specifically binds to HJ cruciform DNA, conferring on it an open structure. The RuvB hexamer acts as an ATP-dependent pump, pulling dsDNA into and through the RuvAB complex. HJ branch migration allows RuvC to scan DNA until it finds its consensus sequence, where it cleaves and resolves the cruciform DNA. The sequence is that of Holliday junction branch migration complex subunit RuvA from Francisella tularensis subsp. tularensis (strain WY96-3418).